We begin with the raw amino-acid sequence, 264 residues long: Spermidine/putrescine transport system permease protein PotC (264 aa).

Over methionine 1 to arginine 7 the chain is Cytoplasmic. Residues glycine 8–valine 27 form a helical membrane-spanning segment. Residues asparagine 28–threonine 65 are Periplasmic-facing. The region spanning alanine 60 to serine 248 is the ABC transmembrane type-1 domain. Residues methionine 66–leucine 85 traverse the membrane as a helical segment. Topologically, residues tyrosine 86 to leucine 100 are cytoplasmic. The helical transmembrane segment at phenylalanine 101–methionine 120 threads the bilayer. At leucine 121–phenylalanine 128 the chain is on the periplasmic side. A helical membrane pass occupies residues tryptophan 129–tyrosine 148. Topologically, residues serine 149–isoleucine 176 are cytoplasmic. Residues isoleucine 177 to serine 196 form a helical membrane-spanning segment. At methionine 197–asparagine 231 the chain is on the periplasmic side. The chain crosses the membrane as a helical span at residues alanine 232 to isoleucine 251. Residues alanine 252–lysine 264 lie on the Cytoplasmic side of the membrane.

It belongs to the binding-protein-dependent transport system permease family. CysTW subfamily.

It is found in the cell inner membrane. Required for the activity of the bacterial periplasmic transport system of putrescine and spermidine. This Escherichia coli O157:H7 protein is Spermidine/putrescine transport system permease protein PotC (potC).